Consider the following 543-residue polypeptide: CTP synthase (543 aa).

An amidoligase domain region spans residues 1-267 (MKQTKYIFVT…LNPIAEILDL (267 aa)). S15 contributes to the CTP binding site. Position 15 (S15) interacts with UTP. ATP-binding positions include 16 to 21 (SLGKGI) and D73. Mg(2+)-binding residues include D73 and E141. CTP-binding positions include 148-150 (DIE), 188-193 (KTKPTQ), and K224. Residues 188–193 (KTKPTQ) and K224 contribute to the UTP site. The region spanning 292–543 (KIAFVGKYVD…IKAAINYEDN (252 aa)) is the Glutamine amidotransferase type-1 domain. G354 lines the L-glutamine pocket. Residue C381 is the Nucleophile; for glutamine hydrolysis of the active site. Residues 382-385 (LGMQ), E405, and R473 contribute to the L-glutamine site. Residues H516 and E518 contribute to the active site.

Belongs to the CTP synthase family. In terms of assembly, homotetramer.

It carries out the reaction UTP + L-glutamine + ATP + H2O = CTP + L-glutamate + ADP + phosphate + 2 H(+). The catalysed reaction is L-glutamine + H2O = L-glutamate + NH4(+). It catalyses the reaction UTP + NH4(+) + ATP = CTP + ADP + phosphate + 2 H(+). Its pathway is pyrimidine metabolism; CTP biosynthesis via de novo pathway; CTP from UDP: step 2/2. Its activity is regulated as follows. Allosterically activated by GTP, when glutamine is the substrate; GTP has no effect on the reaction when ammonia is the substrate. The allosteric effector GTP functions by stabilizing the protein conformation that binds the tetrahedral intermediate(s) formed during glutamine hydrolysis. Inhibited by the product CTP, via allosteric rather than competitive inhibition. Catalyzes the ATP-dependent amination of UTP to CTP with either L-glutamine or ammonia as the source of nitrogen. Regulates intracellular CTP levels through interactions with the four ribonucleotide triphosphates. This chain is CTP synthase, found in Campylobacter jejuni subsp. doylei (strain ATCC BAA-1458 / RM4099 / 269.97).